The primary structure comprises 418 residues: Probable serine hydroxymethyltransferase (418 aa).

Residues leucine 118 and 122–124 (GHL) contribute to the (6S)-5,6,7,8-tetrahydrofolate site. Residue lysine 226 is modified to N6-(pyridoxal phosphate)lysine. Residue 351–353 (SPF) participates in (6S)-5,6,7,8-tetrahydrofolate binding.

This sequence belongs to the SHMT family. Homodimer. It depends on pyridoxal 5'-phosphate as a cofactor.

The protein localises to the cytoplasm. It catalyses the reaction (6R)-5,10-methylene-5,6,7,8-tetrahydrofolate + glycine + H2O = (6S)-5,6,7,8-tetrahydrofolate + L-serine. It functions in the pathway one-carbon metabolism; tetrahydrofolate interconversion. In terms of biological role, catalyzes the reversible interconversion of serine and glycine with tetrahydrofolate (THF) serving as the one-carbon carrier. This reaction serves as the major source of one-carbon groups required for the biosynthesis of purines, thymidylate, methionine, and other important biomolecules. This is Probable serine hydroxymethyltransferase from Mesomycoplasma hyopneumoniae (strain 7448) (Mycoplasma hyopneumoniae).